The chain runs to 809 residues: Endoplasmin homolog (809 aa).

The first 18 residues, 1-18, serve as a signal peptide directing secretion; sequence MRKWALSCALLLVLLLTT. 4 residues coordinate ATP: N111, D155, N168, and F200. N111 carries N-linked (GlcNAc...) asparagine glycosylation. Positions 293 to 320 are enriched in acidic residues; it reads VPADEEESNEEEESTTETTEEEETEDDE. A disordered region spans residues 293 to 329; it reads VPADEEESNEEEESTTETTEEEETEDDEEKKPKTKTV. N410, N450, and N617 each carry an N-linked (GlcNAc...) asparagine glycan. Residues 766 to 809 are disordered; the sequence is SLDLSPDAAVEEEEEVEEPEVEEKESAKQEAEEPEHEQYDKDEL. Residues 774-788 are compositionally biased toward acidic residues; it reads AVEEEEEVEEPEVEE. Residues 789 to 809 show a composition bias toward basic and acidic residues; the sequence is KESAKQEAEEPEHEQYDKDEL. Positions 806-809 match the Prevents secretion from ER motif; sequence KDEL.

It belongs to the heat shock protein 90 family.

It is found in the endoplasmic reticulum lumen. Its function is as follows. May have a molecular chaperone role in the processing of secreted materials. The chain is Endoplasmin homolog from Hordeum vulgare (Barley).